A 484-amino-acid chain; its full sequence is Protein LAZ1 homolog 1 (484 aa).

The first 19 residues, 1–19 (MEWRGILCSLLFIVSVGES), serve as a signal peptide directing secretion. 6 helical membrane-spanning segments follow: residues 42 to 62 (PILSASVFVVIAILLPMYLIF), 76 to 96 (FLIGLILMVPVYAVESFLSLV), 190 to 210 (MILKMICALLAMILEAFGVYG), 219 to 239 (GYPYLAVVLNFSQTWALYCLV), 264 to 284 (IVFLTWWQGIIVAFLFSMGLV), and 299 to 319 (YIICIEMGIAAVVHLYVFPAA). Residues 344-364 (PDPEEVKDSERTTRTRYGRHD) form a disordered region. Positions 347–364 (EEVKDSERTTRTRYGRHD) are enriched in basic and acidic residues. A coiled-coil region spans residues 406-428 (IAKINRTFHQISENVKRFEQQKK). The segment at 459 to 484 (VSDSGLGSTNRHHQSRVSGLWTRMRR) is disordered.

This sequence belongs to the TMEM184 family.

It localises to the membrane. In Arabidopsis thaliana (Mouse-ear cress), this protein is Protein LAZ1 homolog 1.